Reading from the N-terminus, the 22-residue chain is Hemoglobinase-like protein 2 (22 aa).

Belongs to the peptidase C13 family.

The enzyme catalyses Hydrolysis of proteins and small molecule substrates at -Asn-|-Xaa- bonds.. The sequence is that of Hemoglobinase-like protein 2 from Fasciola hepatica (Liver fluke).